Reading from the N-terminus, the 148-residue chain is Universal stress protein YxiE (148 aa).

A signal peptide spans 1-18 (MFNKMLVAIDGSDMSAKA).

Belongs to the universal stress protein A family.

In Bacillus subtilis (strain 168), this protein is Universal stress protein YxiE (yxiE).